The primary structure comprises 247 residues: Probable transcriptional regulatory protein Gura_1416 (247 aa).

It belongs to the TACO1 family.

Its subcellular location is the cytoplasm. The polypeptide is Probable transcriptional regulatory protein Gura_1416 (Geotalea uraniireducens (strain Rf4) (Geobacter uraniireducens)).